The following is a 900-amino-acid chain: Chromodomain-helicase-DNA-binding protein 1-like (900 aa).

Positions 52–217 (VQCFHCQNGC…YSLLCVVEPD (166 aa)) constitute a Helicase ATP-binding domain. 65 to 72 (DEMGLGKT) provides a ligand contact to ATP. The short motif at 168-171 (DEAH) is the DEAH box element. Positions 345-507 (LLDRLLAFLY…QKPSAEADFQ (163 aa)) constitute a Helicase C-terminal domain. Residue serine 534 is modified to Phosphoserine. The disordered stretch occupies residues 546–569 (PDALPAAAAAGGGSLEPEEGSELE). The tract at residues 606-640 (TLLEKTSHGGRTLRNKGSVLIPGLAEGPIKRKKIL) is regulatory linker segment (RLS). Phosphoserine is present on residues serine 612, serine 623, and serine 641. The tract at residues 620-678 (NKGSVLIPGLAEGPIKRKKILSPEELEDRRKKRQEAAAKRKRLMEEKRKEKEEAEHRKK) is required for ATPase activity. The interval 641–673 (SPEELEDRRKKRQEAAAKRKRLMEEKRKEKEEA) is disordered. A coiled-coil region spans residues 643 to 680 (EELEDRRKKRQEAAAKRKRLMEEKRKEKEEAEHRKKMA). A compositionally biased stretch (basic and acidic residues) spans 653-673 (QEAAAKRKRLMEEKRKEKEEA). A Macro domain is found at 709–900 (SAELAYEDLD…ASSSSAPLVP (192 aa)). Residue serine 894 is modified to Phosphoserine.

Belongs to the SNF2/RAD54 helicase family. As to quaternary structure, interacts with nucleosomes; interacts with the acidic patch of histones. Interacts (via macro domain) with PARP1; interacts only when PARP1 is poly-ADP-ribosylated (PARylated). Interacts with CIAO1.

It is found in the nucleus. It localises to the chromosome. It carries out the reaction ATP + H2O = ADP + phosphate + H(+). Its activity is regulated as follows. Adopts an inactive conformation in absence of DNA damage. Binding to poly-ADP-ribosylated histones activates the ATP-dependent chromatin remodeler activity. ATP-dependent chromatin remodeler that mediates chromatin-remodeling following DNA damage. Recruited to DNA damage sites through interaction with poly-ADP-ribose: specifically recognizes and binds histones that are poly-ADP-ribosylated on serine residues in response to DNA damage. Poly-ADP-ribose-binding activates the ATP-dependent chromatin remodeler activity, thereby regulating chromatin during DNA repair. Catalyzes nucleosome sliding away from DNA breaks in an ATP-dependent manner. Chromatin remodeling activity promotes PARP2 removal from chromatin. This chain is Chromodomain-helicase-DNA-binding protein 1-like (Chd1l), found in Mus musculus (Mouse).